The sequence spans 610 residues: Menin (610 aa).

The segment at 214–390 (GVAERSWLYL…SLLEAGEERP (177 aa)) is interaction with FANCD2. Positions 462–552 (AEAAEAEELW…SPPPEGPVLT (91 aa)) are disordered. Positions 484 to 500 (RRESKPEEPPPPKKPAL) are enriched in basic and acidic residues. Phosphoserine occurs at positions 487 and 543. A compositionally biased stretch (pro residues) spans 537–548 (APAPAASPPPEG). The residue at position 594 (Thr594) is a Phosphothreonine.

Component of the MLL-HCF complex, at least composed of KMT2A/MLL1, MEN1, ASH2L, RBBP5, DPY30, WDR5, HCFC1 and HCFC2. Component of the menin-associated histone methyltransferase complex, at least composed of KMT2B/MLL4, MEN1, ASH2L, RBBP5, DPY30 and WDR5. Interacts with POLR2B. Interacts with POLR2A phosphorylated at 'Ser-5', but not with the unphosphorylated, nor 'Ser-2' phosphorylated POLR2A forms. Interacts with FANCD2 and DBF4. Interacts with SMAD3, but not with SMAD2, nor SMAD4. Directly interacts with NFKB1, NFKB2 and RELA. Interacts with JUND (via MBM motif); inhibits the interaction of JUND with MAPK10 and the phosphorylation of JUND by MAP kinases MAPK8 and MAPK10. Interacts with KMT2A (via MBM motif). The KMT2A-MEN1 complex interacts with PSIP1 with a greater affinity as MEN1 enhances interaction of KMT2A with PSIP1.

It localises to the nucleus. Essential component of a MLL/SET1 histone methyltransferase (HMT) complex, a complex that specifically methylates 'Lys-4' of histone H3 (H3K4). Functions as a transcriptional regulator. Binds to the TERT promoter and represses telomerase expression. Plays a role in TGFB1-mediated inhibition of cell-proliferation, possibly regulating SMAD3 transcriptional activity. Represses JUND-mediated transcriptional activation on AP1 sites, as well as that mediated by NFKB subunit RELA. Positively regulates HOXC8 and HOXC6 gene expression. May be involved in normal hematopoiesis through the activation of HOXA9 expression. May be involved in DNA repair. The protein is Menin (MEN1) of Canis lupus familiaris (Dog).